A 231-amino-acid chain; its full sequence is LexA repressor (231 aa).

The segment at 1 to 24 (MTDRKEHKMKPGRRPTEGMTPSQE) is disordered. The H-T-H motif DNA-binding region spans 43 to 62 (VKEIAEALGMKTPSAHEQVQ). Residues serine 146 and lysine 183 each act as for autocatalytic cleavage activity in the active site.

Belongs to the peptidase S24 family. As to quaternary structure, homodimer.

It carries out the reaction Hydrolysis of Ala-|-Gly bond in repressor LexA.. In terms of biological role, represses a number of genes involved in the response to DNA damage (SOS response), including recA and lexA. In the presence of single-stranded DNA, RecA interacts with LexA causing an autocatalytic cleavage which disrupts the DNA-binding part of LexA, leading to derepression of the SOS regulon and eventually DNA repair. This chain is LexA repressor, found in Magnetococcus marinus (strain ATCC BAA-1437 / JCM 17883 / MC-1).